Here is a 732-residue protein sequence, read N- to C-terminus: Catalase-peroxidase (732 aa).

The tryptophyl-tyrosyl-methioninium (Trp-Tyr) (with M-246) cross-link spans 97 to 220 (WHSAGTYRTS…LAAVQMGLIY (124 aa)). The Proton acceptor role is filled by His-98. The tryptophyl-tyrosyl-methioninium (Tyr-Met) (with W-97) cross-link spans 220-246 (YVNPEGPDGNPDPVAAGRDIRETFARM). His-261 is a binding site for heme b.

This sequence belongs to the peroxidase family. Peroxidase/catalase subfamily. Homodimer or homotetramer. Heme b is required as a cofactor. Formation of the three residue Trp-Tyr-Met cross-link is important for the catalase, but not the peroxidase activity of the enzyme.

It carries out the reaction H2O2 + AH2 = A + 2 H2O. The catalysed reaction is 2 H2O2 = O2 + 2 H2O. In terms of biological role, bifunctional enzyme with both catalase and broad-spectrum peroxidase activity. This Chlorobium phaeobacteroides (strain DSM 266 / SMG 266 / 2430) protein is Catalase-peroxidase.